Reading from the N-terminus, the 721-residue chain is Protein mu-NS (721 aa).

The tract at residues 1–13 (MASFKGFSVNTVP) is interaction with sigma-NS. The interval 1-38 (MASFKGFSVNTVPVSKAKRDISSLAATPGIRSQPFTPS) is RNA-binding. The interaction with mu-2 stretch occupies residues 14–40 (VSKAKRDISSLAATPGIRSQPFTPSVD). An involved in the formation of factory-like inclusions region spans residues 471–721 (SSDMVDGIKL…IDFSVPTDEL (251 aa)). 2 coiled-coil regions span residues 523 to 560 (LLSQ…SAQA) and 628 to 686 (QMNG…NQRQ).

Belongs to the orthoreovirus mu-NS protein family. Interacts with mu-2. Interacts with sigma-NS; in viral factories. Interacts with the inner capsid proteins lambda-1 and sigma-2, and outer capsid protein lambda-2; in viral factories. In terms of processing, the N-terminus is blocked.

It localises to the host cytoplasm. Functionally, non-structural protein implicated with protein sigma-NS in forming the matrix of viral factories, which are large inclusions in the host cytoplasm where replication intermediates are assembled and viral RNA replication takes place. Together with mu-2, recruits the other core proteins to these factories. In Mammalia (T1L), this protein is Protein mu-NS (M3).